Reading from the N-terminus, the 185-residue chain is Alcohol dehydrogenase 1 (185 aa).

NAD(+) is bound by residues 10 to 15 (GLGGVG), Asp34, Lys39, 103 to 105 (VGV), and Arg180.

This sequence belongs to the zinc-containing alcohol dehydrogenase family. Class-I subfamily. In terms of assembly, homodimer. Requires Zn(2+) as cofactor.

It localises to the cytoplasm. The enzyme catalyses a primary alcohol + NAD(+) = an aldehyde + NADH + H(+). It catalyses the reaction a secondary alcohol + NAD(+) = a ketone + NADH + H(+). The chain is Alcohol dehydrogenase 1 (ADH1) from Anas platyrhynchos (Mallard).